A 217-amino-acid chain; its full sequence is 3,4-dihydroxy-2-butanone 4-phosphate synthase (217 aa).

Residues 37–38 (RE), Asp42, 150–154 (RGGHT), and Glu174 contribute to the D-ribulose 5-phosphate site. Glu38 is a Mg(2+) binding site. His153 contributes to the Mg(2+) binding site.

This sequence belongs to the DHBP synthase family. As to quaternary structure, homodimer. Mg(2+) serves as cofactor. Requires Mn(2+) as cofactor.

It carries out the reaction D-ribulose 5-phosphate = (2S)-2-hydroxy-3-oxobutyl phosphate + formate + H(+). It participates in cofactor biosynthesis; riboflavin biosynthesis; 2-hydroxy-3-oxobutyl phosphate from D-ribulose 5-phosphate: step 1/1. In terms of biological role, catalyzes the conversion of D-ribulose 5-phosphate to formate and 3,4-dihydroxy-2-butanone 4-phosphate. The chain is 3,4-dihydroxy-2-butanone 4-phosphate synthase from Escherichia fergusonii (strain ATCC 35469 / DSM 13698 / CCUG 18766 / IAM 14443 / JCM 21226 / LMG 7866 / NBRC 102419 / NCTC 12128 / CDC 0568-73).